The following is a 273-amino-acid chain: Shikimate dehydrogenase (NADP(+)) (273 aa).

Shikimate-binding positions include 14–16 and Thr61; that span reads SKS. Lys65 functions as the Proton acceptor in the catalytic mechanism. An NADP(+)-binding site is contributed by Asp77. Shikimate contacts are provided by Asn86 and Asp102. NADP(+)-binding positions include 126 to 130, 150 to 155, and Met213; these read GAGGA and NRTYEK. Tyr215 serves as a coordination point for shikimate. Position 237 (Gly237) interacts with NADP(+).

This sequence belongs to the shikimate dehydrogenase family. In terms of assembly, homodimer.

It catalyses the reaction shikimate + NADP(+) = 3-dehydroshikimate + NADPH + H(+). It functions in the pathway metabolic intermediate biosynthesis; chorismate biosynthesis; chorismate from D-erythrose 4-phosphate and phosphoenolpyruvate: step 4/7. Involved in the biosynthesis of the chorismate, which leads to the biosynthesis of aromatic amino acids. Catalyzes the reversible NADPH linked reduction of 3-dehydroshikimate (DHSA) to yield shikimate (SA). The sequence is that of Shikimate dehydrogenase (NADP(+)) from Aliivibrio salmonicida (strain LFI1238) (Vibrio salmonicida (strain LFI1238)).